The following is a 97-amino-acid chain: MKIEVNNELISRLQNLALVELNDREKERIKRDIKNILDFFDQINKLDLSNVEPLFHPISTGKLRKDEIIKPLSRDEALSNVKRKEDGFIVGPATYGE.

This sequence belongs to the GatC family. Heterotrimer of A, B and C subunits.

It catalyses the reaction L-glutamyl-tRNA(Gln) + L-glutamine + ATP + H2O = L-glutaminyl-tRNA(Gln) + L-glutamate + ADP + phosphate + H(+). The enzyme catalyses L-aspartyl-tRNA(Asn) + L-glutamine + ATP + H2O = L-asparaginyl-tRNA(Asn) + L-glutamate + ADP + phosphate + 2 H(+). Functionally, allows the formation of correctly charged Asn-tRNA(Asn) or Gln-tRNA(Gln) through the transamidation of misacylated Asp-tRNA(Asn) or Glu-tRNA(Gln) in organisms which lack either or both of asparaginyl-tRNA or glutaminyl-tRNA synthetases. The reaction takes place in the presence of glutamine and ATP through an activated phospho-Asp-tRNA(Asn) or phospho-Glu-tRNA(Gln). The sequence is that of Glutamyl-tRNA(Gln) amidotransferase subunit C from Sulfurisphaera tokodaii (strain DSM 16993 / JCM 10545 / NBRC 100140 / 7) (Sulfolobus tokodaii).